The primary structure comprises 66 residues: Large ribosomal subunit protein uL29 (66 aa).

This sequence belongs to the universal ribosomal protein uL29 family.

This Helicobacter pylori (strain J99 / ATCC 700824) (Campylobacter pylori J99) protein is Large ribosomal subunit protein uL29 (rpmC).